The following is a 558-amino-acid chain: MPWWLISLTFIYRLFLCATIRTVEAPDEWWQSTEVAYNMVFGKGHLPWEWRYGLRSVFFPAVVALPFYLLKLLGRDTTWAVWFAPRVLQALVLTLIDVSVFRMGATLDELLAKRELELAEEMRQSKTKGFSYFREVFVSRSRRGICNSISYTALLLSLSNWYMAYCGVRLYGNVIEALLVLLTLQQRRYVPFLLLTGLASAIRVTSAVVLSPLVFRHLANATREHGFTRGLFRIVLTGLIVLVAVLGGVMVLDYCFYGRWVLTPLAFFRFNVLHNLSRFFGEHPWYFYVGPVLVGIVGPHVLFTIAAPLVLWRDTASRAVSRPVLGMLGIGAWTLGFYSLIDHKEMRFVFVVIPLSLITAAFVLVRWSRTSAVVVKMNRLFVLFNIVMIYLMGYVYRRGPLDVMAEVRDGPRINRLDVIATCYTVPGYSYMHRKVNHLGFVDCSIDLDEKTGLPKVTEDIMFRRYPKEYVLWRYDGKHSFNMGDLEESRKASELQSVVMPKSAPHPDAMVMTRAVAKEIEEPFLKRHGYRLYRTFLHSPLTLAPYEDIYIQMWVKVTK.

Helical transmembrane passes span 53 to 73 (GLRS…LKLL), 81 to 101 (VWFA…VSVF), 164 to 184 (AYCG…LLTL), and 190 to 210 (VPFL…AVVL). Residue asparagine 220 is glycosylated (N-linked (GlcNAc...) asparagine). The chain crosses the membrane as a helical span at residues 234–254 (IVLTGLIVLVAVLGGVMVLDY). The N-linked (GlcNAc...) asparagine glycan is linked to asparagine 275. Helical transmembrane passes span 292–312 (VLVG…LVLW), 323–343 (PVLG…LIDH), 348–368 (FVFV…VRWS), and 372–392 (AVVV…IYLM).

The protein belongs to the glycosyltransferase 22 family. PIGB subfamily.

The protein resides in the endoplasmic reticulum membrane. It participates in glycolipid biosynthesis; glycosylphosphatidylinositol-anchor biosynthesis. Its function is as follows. Mannosyltransferase involved in glycosylphosphatidylinositol-anchor biosynthesis. Transfers the third alpha-1,2-mannose to Man2-GlcN-acyl-PI during GPI precursor assembly. In Trypanosoma brucei brucei (strain 927/4 GUTat10.1), this protein is GPI mannosyltransferase 3 (GPI10).